A 367-amino-acid chain; its full sequence is Dimethyladenosine transferase 1, mitochondrial (367 aa).

The N-terminal 16 residues, 1–16, are a transit peptide targeting the mitochondrion; the sequence is MASASRLPPLPALRDF. S-adenosyl-L-methionine contacts are provided by residues 30-33, asparagine 31, leucine 33, glycine 58, glutamate 80, aspartate 106, and asparagine 141; that span reads QNYL.

The protein belongs to the class I-like SAM-binding methyltransferase superfamily. rRNA adenine N(6)-methyltransferase family. KsgA subfamily.

It is found in the mitochondrion. Probable S-adenosyl-L-methionine-dependent methyltransferase which specifically dimethylates mitochondrial 12S rRNA at the conserved stem loop. Also required for basal transcription of mitochondrial DNA. Stimulates transcription independently of the methyltransferase activity. In Caenorhabditis elegans, this protein is Dimethyladenosine transferase 1, mitochondrial (tfbm-1).